A 54-amino-acid polypeptide reads, in one-letter code: Ovomucoid (54 aa).

The Kazal-like domain maps to 4–54 (VDCSDYPKPACTVEYMPLCGSDNKTYDNKCNFCNAVVDSNGTLTLSHFGKC). 3 cysteine pairs are disulfide-bonded: C6–C36, C14–C33, and C22–C54. N43 carries N-linked (GlcNAc...) asparagine glycosylation.

It is found in the secreted. The chain is Ovomucoid from Anser anser anser (Western greylag goose).